A 333-amino-acid chain; its full sequence is Adenosine deaminase (333 aa).

2 residues coordinate Zn(2+): His-12 and His-14. His-14, Asp-16, and Gly-170 together coordinate substrate. His-197 is a Zn(2+) binding site. Glu-200 (proton donor) is an active-site residue. Asp-278 serves as a coordination point for Zn(2+). Asp-279 is a binding site for substrate.

Belongs to the metallo-dependent hydrolases superfamily. Adenosine and AMP deaminases family. Adenosine deaminase subfamily. The cofactor is Zn(2+).

It carries out the reaction adenosine + H2O + H(+) = inosine + NH4(+). It catalyses the reaction 2'-deoxyadenosine + H2O + H(+) = 2'-deoxyinosine + NH4(+). Its function is as follows. Catalyzes the hydrolytic deamination of adenosine and 2-deoxyadenosine. This is Adenosine deaminase from Salmonella paratyphi C (strain RKS4594).